Consider the following 340-residue polypeptide: Ketol-acid reductoisomerase (NADP(+)) (340 aa).

A KARI N-terminal Rossmann domain is found at alanine 2–threonine 182. NADP(+) contacts are provided by residues phenylalanine 25–glutamine 28, serine 51, serine 53, and aspartate 83–glutamine 86. Residue histidine 108 is part of the active site. Glycine 134 provides a ligand contact to NADP(+). A KARI C-terminal knotted domain is found at threonine 183–valine 328. 4 residues coordinate Mg(2+): aspartate 191, glutamate 195, glutamate 227, and glutamate 231. Serine 252 serves as a coordination point for substrate.

Belongs to the ketol-acid reductoisomerase family. Mg(2+) is required as a cofactor.

It catalyses the reaction (2R)-2,3-dihydroxy-3-methylbutanoate + NADP(+) = (2S)-2-acetolactate + NADPH + H(+). It carries out the reaction (2R,3R)-2,3-dihydroxy-3-methylpentanoate + NADP(+) = (S)-2-ethyl-2-hydroxy-3-oxobutanoate + NADPH + H(+). It functions in the pathway amino-acid biosynthesis; L-isoleucine biosynthesis; L-isoleucine from 2-oxobutanoate: step 2/4. Its pathway is amino-acid biosynthesis; L-valine biosynthesis; L-valine from pyruvate: step 2/4. Functionally, involved in the biosynthesis of branched-chain amino acids (BCAA). Catalyzes an alkyl-migration followed by a ketol-acid reduction of (S)-2-acetolactate (S2AL) to yield (R)-2,3-dihydroxy-isovalerate. In the isomerase reaction, S2AL is rearranged via a Mg-dependent methyl migration to produce 3-hydroxy-3-methyl-2-ketobutyrate (HMKB). In the reductase reaction, this 2-ketoacid undergoes a metal-dependent reduction by NADPH to yield (R)-2,3-dihydroxy-isovalerate. This is Ketol-acid reductoisomerase (NADP(+)) from Roseiflexus castenholzii (strain DSM 13941 / HLO8).